A 420-amino-acid polypeptide reads, in one-letter code: ATP phosphoribosyltransferase regulatory subunit (420 aa).

It belongs to the class-II aminoacyl-tRNA synthetase family. HisZ subfamily. In terms of assembly, heteromultimer composed of HisG and HisZ subunits.

Its subcellular location is the cytoplasm. Its pathway is amino-acid biosynthesis; L-histidine biosynthesis; L-histidine from 5-phospho-alpha-D-ribose 1-diphosphate: step 1/9. Required for the first step of histidine biosynthesis. May allow the feedback regulation of ATP phosphoribosyltransferase activity by histidine. This chain is ATP phosphoribosyltransferase regulatory subunit, found in Bacillus cereus (strain AH187).